The primary structure comprises 273 residues: Small ribosomal subunit protein eS1 (273 aa).

The protein belongs to the eukaryotic ribosomal protein eS1 family. In terms of assembly, component of the small ribosomal subunit. Mature ribosomes consist of a small (40S) and a large (60S) subunit. The 40S subunit contains about 33 different proteins and 1 molecule of RNA (18S). The 60S subunit contains about 49 different proteins and 3 molecules of RNA (25S, 5.8S and 5S).

It localises to the cytoplasm. The chain is Small ribosomal subunit protein eS1 (rps3a) from Dictyostelium discoideum (Social amoeba).